We begin with the raw amino-acid sequence, 91 residues long: DNA-directed RNA polymerase subunit omega (91 aa).

Belongs to the RNA polymerase subunit omega family. As to quaternary structure, the RNAP catalytic core consists of 2 alpha, 1 beta, 1 beta' and 1 omega subunit. When a sigma factor is associated with the core the holoenzyme is formed, which can initiate transcription.

The catalysed reaction is RNA(n) + a ribonucleoside 5'-triphosphate = RNA(n+1) + diphosphate. In terms of biological role, promotes RNA polymerase assembly. Latches the N- and C-terminal regions of the beta' subunit thereby facilitating its interaction with the beta and alpha subunits. The protein is DNA-directed RNA polymerase subunit omega of Enterobacter sp. (strain 638).